Consider the following 1244-residue polypeptide: ATP-dependent RNA helicase DHX8 (1244 aa).

Lysine 140 is covalently cross-linked (Glycyl lysine isopeptide (Lys-Gly) (interchain with G-Cter in SUMO2)). 2 disordered regions span residues 152–289 (LMPS…PAIG) and 361–396 (DVDQ…RPTH). Residues 160-169 (EKQRDPEHRD) show a composition bias toward basic and acidic residues. Positions 170 to 179 (RTKKKKRSRS) are enriched in basic residues. The span at 180 to 220 (RDRDRDRDRDRDRDRDRDRDRDKDRERDRDRERDRERDRER) shows a compositional bias: basic and acidic residues. Positions 221–234 (DHKRRHRSRSRSHS) are enriched in basic residues. A compositionally biased stretch (basic and acidic residues) spans 256 to 283 (FKDRKDREKYGERNLDRWRDKHVDRPPP). Residues 289-360 (GDIYNGKVTS…TGTKTSLSMK (72 aa)) enclose the S1 motif domain. Basic and acidic residues predominate over residues 386–395 (TSMRNPDRPT). Phosphoserine is present on serine 419. Residue lysine 423 forms a Glycyl lysine isopeptide (Lys-Gly) (interchain with G-Cter in SUMO2) linkage. Serine 484 is subject to Phosphoserine. The 164-residue stretch at 599-762 (VQAVHDNQIL…FYEAPIFTIP (164 aa)) folds into the Helicase ATP-binding domain. An ATP-binding site is contributed by 612-619 (GETGSGKT). Positions 709-712 (DEAH) match the DEAH box motif. A Helicase C-terminal domain is found at 780 to 960 (YLDASLITVM…STVLSLKAMG (181 aa)).

It belongs to the DEAD box helicase family. DEAH subfamily. DDX8/PRP22 sub-subfamily. In terms of assembly, identified in the spliceosome C complex. Interacts with ARRB2; the interaction is detected in the nucleus upon OR1D2 stimulation. Interacts with SRRM2. Interacts with CACTIN.

The protein resides in the nucleus. It carries out the reaction ATP + H2O = ADP + phosphate + H(+). Its function is as follows. Involved in pre-mRNA splicing as component of the spliceosome. Facilitates nuclear export of spliced mRNA by releasing the RNA from the spliceosome. The sequence is that of ATP-dependent RNA helicase DHX8 (Dhx8) from Mus musculus (Mouse).